The following is a 344-amino-acid chain: N-acetyl-gamma-glutamyl-phosphate reductase (344 aa).

The active site involves C150.

Belongs to the NAGSA dehydrogenase family. Type 1 subfamily.

The protein localises to the cytoplasm. The catalysed reaction is N-acetyl-L-glutamate 5-semialdehyde + phosphate + NADP(+) = N-acetyl-L-glutamyl 5-phosphate + NADPH + H(+). The protein operates within amino-acid biosynthesis; L-arginine biosynthesis; N(2)-acetyl-L-ornithine from L-glutamate: step 3/4. In terms of biological role, catalyzes the NADPH-dependent reduction of N-acetyl-5-glutamyl phosphate to yield N-acetyl-L-glutamate 5-semialdehyde. The sequence is that of N-acetyl-gamma-glutamyl-phosphate reductase from Pseudomonas entomophila (strain L48).